The sequence spans 836 residues: Sucrose synthase 5 (836 aa).

Residues 270-748 form a GT-B glycosyltransferase region; that stretch reads RIFNVVIFSV…GLQRINECYT (479 aa). Positions 805 to 836 are disordered; sequence PPPLPPKPLVKPSASKGSKRTQPRLSFRLFGA.

Belongs to the glycosyltransferase 1 family. Plant sucrose synthase subfamily. As to expression, detected in the whole plant but more precisely confined to the vasculature in cotyledons, leaves, petals, anthers and roots. Also detected in developing siliques, young immature rosette and cauline leaves.

It localises to the secreted. It is found in the cell wall. The enzyme catalyses an NDP-alpha-D-glucose + D-fructose = a ribonucleoside 5'-diphosphate + sucrose + H(+). Its function is as follows. Sucrose-cleaving enzyme that provides UDP-glucose and fructose for various metabolic pathways. Functions in callose synthesis at the site of phloem sieve elements. The polypeptide is Sucrose synthase 5 (SUS5) (Arabidopsis thaliana (Mouse-ear cress)).